Consider the following 407-residue polypeptide: Phenazine 1,6-dicarboxylic acid hydroxylase PhzS (407 aa).

Residues G17, V134, and D313 each contribute to the FAD site.

It depends on FAD as a cofactor.

The catalysed reaction is phenazine-1,6-dicarboxylate + NADH + O2 + 2 H(+) = 6-hydroxyphenazine-1-carboxylate + CO2 + NAD(+) + H2O. The enzyme catalyses 6-hydroxyphenazine-1-carboxylate + NADH + O2 + 2 H(+) = 1,6-dihydroxyphenazine + CO2 + NAD(+) + H2O. It catalyses the reaction phenazine-1-carboxylate + NADH + O2 + 2 H(+) = 1-hydroxyphenazine + CO2 + NAD(+) + H2O. Its function is as follows. Involved in the biosynthesis of phenazine natural products including myxin, an N(5),N(10)-dioxide phenazine antiobiotic, which has antimicrobial activity. Catalyzes the decarboxylative hydroxylations of phenazine 1,6-dicarboxylic acid (PDC) to produce 1,6-dihydroxyphenazine (DHP). Low activity with phenazine 1-carboxylic acid (PCA) to produce 1-hydroxyphenazine. In Lysobacter antibioticus, this protein is Phenazine 1,6-dicarboxylic acid hydroxylase PhzS.